An 88-amino-acid polypeptide reads, in one-letter code: UPF0367 protein Tery_1229 (88 aa).

The protein belongs to the UPF0367 family.

The sequence is that of UPF0367 protein Tery_1229 from Trichodesmium erythraeum (strain IMS101).